The chain runs to 165 residues: Transcription elongation factor GreA (165 aa).

Positions 55-78 (AAKEEQGKQELRVRQLTQLLESAK) form a coiled coil.

Belongs to the GreA/GreB family.

Functionally, necessary for efficient RNA polymerase transcription elongation past template-encoded arresting sites. The arresting sites in DNA have the property of trapping a certain fraction of elongating RNA polymerases that pass through, resulting in locked ternary complexes. Cleavage of the nascent transcript by cleavage factors such as GreA or GreB allows the resumption of elongation from the new 3'terminus. GreA releases sequences of 2 to 3 nucleotides. The sequence is that of Transcription elongation factor GreA from Streptomyces coelicolor (strain ATCC BAA-471 / A3(2) / M145).